Reading from the N-terminus, the 419-residue chain is Probable serine/threonine-protein kinase DDB_G0290859 (419 aa).

The Protein kinase domain occupies 40-387; sequence YDIISTIGSG…ASTIKKHPFF (348 aa). ATP is bound by residues 46 to 54 and Lys-69; that span reads IGSGSYGEV. Asp-173 (proton acceptor) is an active-site residue. The AGC-kinase C-terminal domain maps to 388-419; it reads EGINWEEMANFNVEPPFKPTLSSDDDISYFTN.

The protein belongs to the protein kinase superfamily. AGC Ser/Thr protein kinase family.

It carries out the reaction L-seryl-[protein] + ATP = O-phospho-L-seryl-[protein] + ADP + H(+). The enzyme catalyses L-threonyl-[protein] + ATP = O-phospho-L-threonyl-[protein] + ADP + H(+). This Dictyostelium discoideum (Social amoeba) protein is Probable serine/threonine-protein kinase DDB_G0290859.